Here is a 207-residue protein sequence, read N- to C-terminus: Phenazine biosynthesis protein PhzD (207 aa).

The Proton donor role is filled by D38. Substrate-binding positions include Q78, R87, K122, and Y151–G155.

This sequence belongs to the isochorismatase family. Homodimer.

The enzyme catalyses (2S)-2-amino-4-deoxychorismate + H2O = (5S,6S)-6-amino-5-hydroxycyclohexa-1,3-diene-1-carboxyate + pyruvate. Its pathway is antibiotic biosynthesis; phenazine biosynthesis. Involved in the biosynthesis of the antibiotic phenazine, a nitrogen-containing heterocyclic molecule having important roles in virulence, competition and biological control. Catalyzes the hydrolysis of the vinyl ether functional group of 2-amino-2-deoxyisochorismate (ADIC), yielding pyruvate and trans-2,3-dihydro-3-hydroxyanthranilic acid (DHHA). The polypeptide is Phenazine biosynthesis protein PhzD (Pseudomonas fluorescens).